The sequence spans 1274 residues: Meiosis inhibitor protein 1 (1274 aa).

As to expression, expressed predominantly in testis. Weakly expressed in spleen and thymus. Expressed in the ovaries, Fallopian tubes and uterus.

Required for normal meiotic chromosome synapsis. May be involved in the formation of meiotic double-strand breaks (DSBs) in spermatocytes. This is Meiosis inhibitor protein 1 from Homo sapiens (Human).